A 342-amino-acid polypeptide reads, in one-letter code: Anthranilate phosphoribosyltransferase (342 aa).

5-phospho-alpha-D-ribose 1-diphosphate contacts are provided by residues Gly-83, Gly-86–Asp-87, Thr-91, Asn-93–Thr-96, Lys-111–Ser-119, and Ser-123. An anthranilate-binding site is contributed by Gly-83. Ser-95 is a Mg(2+) binding site. An anthranilate-binding site is contributed by Asn-114. Arg-169 is a binding site for anthranilate. Asp-228 and Glu-229 together coordinate Mg(2+).

It belongs to the anthranilate phosphoribosyltransferase family. Homodimer. It depends on Mg(2+) as a cofactor.

The catalysed reaction is N-(5-phospho-beta-D-ribosyl)anthranilate + diphosphate = 5-phospho-alpha-D-ribose 1-diphosphate + anthranilate. Its pathway is amino-acid biosynthesis; L-tryptophan biosynthesis; L-tryptophan from chorismate: step 2/5. Catalyzes the transfer of the phosphoribosyl group of 5-phosphorylribose-1-pyrophosphate (PRPP) to anthranilate to yield N-(5'-phosphoribosyl)-anthranilate (PRA). The polypeptide is Anthranilate phosphoribosyltransferase (Paraburkholderia phymatum (strain DSM 17167 / CIP 108236 / LMG 21445 / STM815) (Burkholderia phymatum)).